Reading from the N-terminus, the 96-residue chain is UPF0235 protein ESA_00387 (96 aa).

This sequence belongs to the UPF0235 family.

The polypeptide is UPF0235 protein ESA_00387 (Cronobacter sakazakii (strain ATCC BAA-894) (Enterobacter sakazakii)).